The primary structure comprises 315 residues: Tyrosine recombinase XerC (315 aa).

The Core-binding (CB) domain maps to 14–105; the sequence is PDLLNERQSW…GLRSLLHHLQ (92 aa). Positions 126–309 constitute a Tyr recombinase domain; sequence SLPKPLTDRQ…DTARLLEIYD (184 aa). Residues Arg169, Lys193, His261, Arg264, and His287 contribute to the active site. Tyr296 functions as the O-(3'-phospho-DNA)-tyrosine intermediate in the catalytic mechanism.

This sequence belongs to the 'phage' integrase family. XerC subfamily. In terms of assembly, forms a cyclic heterotetrameric complex composed of two molecules of XerC and two molecules of XerD.

It localises to the cytoplasm. Its function is as follows. Site-specific tyrosine recombinase, which acts by catalyzing the cutting and rejoining of the recombining DNA molecules. The XerC-XerD complex is essential to convert dimers of the bacterial chromosome into monomers to permit their segregation at cell division. It also contributes to the segregational stability of plasmids. This is Tyrosine recombinase XerC from Agrobacterium fabrum (strain C58 / ATCC 33970) (Agrobacterium tumefaciens (strain C58)).